The sequence spans 504 residues: Cytochrome P450 2D10 (504 aa).

At Ser-249 the chain carries Phosphoserine. Heme is bound at residue Cys-446.

It belongs to the cytochrome P450 family. Requires heme as cofactor.

It is found in the endoplasmic reticulum membrane. The protein localises to the microsome membrane. It carries out the reaction an organic molecule + reduced [NADPH--hemoprotein reductase] + O2 = an alcohol + oxidized [NADPH--hemoprotein reductase] + H2O + H(+). Cytochromes P450 are a group of heme-thiolate monooxygenases. In liver microsomes, this enzyme is involved in an NADPH-dependent electron transport pathway. It oxidizes a variety of structurally unrelated compounds, including steroids, fatty acids, and xenobiotics. This chain is Cytochrome P450 2D10 (Cyp2d10), found in Mus musculus (Mouse).